The primary structure comprises 339 residues: Holliday junction branch migration complex subunit RuvB (339 aa).

The interval 1–180 (MTRTITPDMT…FGVISRLEFY (180 aa)) is large ATPase domain (RuvB-L). ATP-binding positions include Leu19, Arg20, Gly61, Lys64, Thr65, Thr66, 127 to 129 (EDF), Arg170, Tyr180, and Arg217. A Mg(2+)-binding site is contributed by Thr65. The interval 181-251 (TIEELAFIIT…VVQDALALLE (71 aa)) is small ATPAse domain (RuvB-S). The head domain (RuvB-H) stretch occupies residues 254–339 (HMGFDYMDRM…EPPQGKLFQD (86 aa)). Residues Arg309 and Arg314 each contribute to the DNA site.

This sequence belongs to the RuvB family. As to quaternary structure, homohexamer. Forms an RuvA(8)-RuvB(12)-Holliday junction (HJ) complex. HJ DNA is sandwiched between 2 RuvA tetramers; dsDNA enters through RuvA and exits via RuvB. An RuvB hexamer assembles on each DNA strand where it exits the tetramer. Each RuvB hexamer is contacted by two RuvA subunits (via domain III) on 2 adjacent RuvB subunits; this complex drives branch migration. In the full resolvosome a probable DNA-RuvA(4)-RuvB(12)-RuvC(2) complex forms which resolves the HJ.

It localises to the cytoplasm. It catalyses the reaction ATP + H2O = ADP + phosphate + H(+). The RuvA-RuvB-RuvC complex processes Holliday junction (HJ) DNA during genetic recombination and DNA repair, while the RuvA-RuvB complex plays an important role in the rescue of blocked DNA replication forks via replication fork reversal (RFR). RuvA specifically binds to HJ cruciform DNA, conferring on it an open structure. The RuvB hexamer acts as an ATP-dependent pump, pulling dsDNA into and through the RuvAB complex. RuvB forms 2 homohexamers on either side of HJ DNA bound by 1 or 2 RuvA tetramers; 4 subunits per hexamer contact DNA at a time. Coordinated motions by a converter formed by DNA-disengaged RuvB subunits stimulates ATP hydrolysis and nucleotide exchange. Immobilization of the converter enables RuvB to convert the ATP-contained energy into a lever motion, pulling 2 nucleotides of DNA out of the RuvA tetramer per ATP hydrolyzed, thus driving DNA branch migration. The RuvB motors rotate together with the DNA substrate, which together with the progressing nucleotide cycle form the mechanistic basis for DNA recombination by continuous HJ branch migration. Branch migration allows RuvC to scan DNA until it finds its consensus sequence, where it cleaves and resolves cruciform DNA. The sequence is that of Holliday junction branch migration complex subunit RuvB from Geotalea daltonii (strain DSM 22248 / JCM 15807 / FRC-32) (Geobacter daltonii).